The following is a 71-amino-acid chain: Phenoloxidase 3 (71 aa).

Cu cation contacts are provided by His-3 and His-29.

The protein belongs to the tyrosinase family. Cu(2+) serves as cofactor. Upon activation, a trypsin type protease cleaves prophenol oxidase to yield the active enzyme. Hemocytes and plasma.

It is found in the secreted. The catalysed reaction is 2 L-dopa + O2 = 2 L-dopaquinone + 2 H2O. It carries out the reaction L-tyrosine + O2 = L-dopaquinone + H2O. In terms of biological role, this is a copper-containing oxidase that functions in the formation of pigments such as melanins and other polyphenolic compounds. Catalyzes the rate-limiting conversions of tyrosine to DOPA, DOPA to DOPA-quinone and possibly 5,6 dihydroxyindole to indole-5'6 quinone. This Sarcophaga argyrostoma (Flesh fly) protein is Phenoloxidase 3.